Consider the following 233-residue polypeptide: ATP synthase subunit a (233 aa).

Transmembrane regions (helical) follow at residues 27–47 (ANFVTMQLLVVAIIVVLFAIL), 85–105 (YLAFFGTIFIFILFANLIGVV), 114–134 (VPSVPAGCAIAAFFYYNIVGV), 143–163 (LAHFAGPMPLLAPLMIPIELV), 189–209 (VFLKLTFLFVPAVFMGLHVFV), and 210–230 (SFLQAYIFMLLTMMYVAGAVA).

Belongs to the ATPase A chain family. In terms of assembly, F-type ATPases have 2 components, CF(1) - the catalytic core - and CF(0) - the membrane proton channel. CF(1) has five subunits: alpha(3), beta(3), gamma(1), delta(1), epsilon(1). CF(0) has three main subunits: a(1), b(2) and c(9-12). The alpha and beta chains form an alternating ring which encloses part of the gamma chain. CF(1) is attached to CF(0) by a central stalk formed by the gamma and epsilon chains, while a peripheral stalk is formed by the delta and b chains.

It is found in the cell inner membrane. Its function is as follows. Key component of the proton channel; it plays a direct role in the translocation of protons across the membrane. The chain is ATP synthase subunit a from Solibacter usitatus (strain Ellin6076).